The chain runs to 406 residues: Transcriptional activator NprA (406 aa).

TPR repeat units follow at residues 125 to 158 (YYYY…FRSQ), 206 to 239 (AECH…AQII), 246 to 279 (GTIE…KRNS), and 285 to 318 (FITL…LKRE).

Functionally, activates the transcription of nprS by about five fold. May bind to the upstream region of nprS promoter. This is Transcriptional activator NprA (nprA) from Geobacillus stearothermophilus (Bacillus stearothermophilus).